A 188-amino-acid polypeptide reads, in one-letter code: Adrenodoxin, mitochondrial (188 aa).

A mitochondrion-targeting transit peptide spans 1 to 64; that stretch reads MAAAPGARLL…RPLSVSARAR (64 aa). At Ser-67 the chain carries Phosphoserine. The 107-residue stretch at 69-175 folds into the 2Fe-2S ferredoxin-type domain; it reads DKITVHFKNR…NMTVRVPEAV (107 aa). N6-acetyllysine; alternate is present on Lys-70. Lys-70 is subject to N6-succinyllysine; alternate. [2Fe-2S] cluster-binding residues include Cys-110, Cys-116, Cys-119, and Cys-156. N6-succinyllysine is present on Lys-162. At Ser-181 the chain carries Phosphoserine.

It belongs to the adrenodoxin/putidaredoxin family. As to quaternary structure, interacts with CYP11A1. The cofactor is [2Fe-2S] cluster.

Its subcellular location is the mitochondrion matrix. Essential for the synthesis of various steroid hormones, participates in the reduction of mitochondrial cytochrome P450 for steroidogenesis. Transfers electrons from adrenodoxin reductase to CYP11A1, a cytochrome P450 that catalyzes cholesterol side-chain cleavage. Does not form a ternary complex with adrenodoxin reductase and CYP11A1 but shuttles between the two enzymes to transfer electrons. The polypeptide is Adrenodoxin, mitochondrial (Fdx1) (Mus musculus (Mouse)).